The sequence spans 317 residues: COP9 signalosome complex subunit 6b (317 aa).

The 154-residue stretch at 11–164 folds into the MPN domain; sequence FKLHPLVMLN…VTIYESEFHV (154 aa).

This sequence belongs to the peptidase M67A family. CSN6 subfamily. Component of the CSN complex, probably composed of CSN1, CSN2, CSN3, CSN4, CSN5 (CSN5A or CSN5B), CSN6 (CSN6A or CSN6B), CSN7 and CSN8. Interacts with itself. In the complex, it probably interacts directly with CSN4, CSN5A or CSN5B, and CSN7. Binds to the translation initiation factors TIF3E1.

It is found in the cytoplasm. The protein localises to the nucleus. Functionally, component of the COP9 signalosome complex (CSN), a complex involved in various cellular and developmental processes such as photomorphogenesis and auxin and jasmonate responses. The CSN complex is an essential regulator of the ubiquitin (Ubl) conjugation pathway by mediating the deneddylation of the cullin subunits of SCF-type E3 ligase complexes, leading to decrease the Ubl ligase activity of SCF. It is involved in repression of photomorphogenesis in darkness by regulating the activity of COP1-containing Ubl ligase complexes. The complex is also required for degradation of PSIAA6 by regulating the activity of the Ubl ligase SCF-TIR complex. Essential for the structural integrity of the CSN holocomplex. This is COP9 signalosome complex subunit 6b from Arabidopsis thaliana (Mouse-ear cress).